The sequence spans 568 residues: Periplasmic pectate lyase (568 aa).

Residues 1 to 19 form the signal peptide; that stretch reads MKRFALSLLAGLVALQASA.

The protein belongs to the polysaccharide lyase 2 family.

It localises to the periplasm. The catalysed reaction is Eliminative cleavage of (1-&gt;4)-alpha-D-galacturonan to give oligosaccharides with 4-deoxy-alpha-D-galact-4-enuronosyl groups at their non-reducing ends.. It participates in glycan metabolism; pectin degradation; 2-dehydro-3-deoxy-D-gluconate from pectin: step 2/5. This is Periplasmic pectate lyase (pelB) from Pectobacterium carotovorum subsp. carotovorum (Erwinia carotovora subsp. carotovora).